Reading from the N-terminus, the 903-residue chain is MVCVTDQNNENPSQNRADKLPKSWDPKAVEADLYQGWVDAGYFTADPASEKPGYSIVLPPPNVTGQLHMGHALDHTLMDALARRKRMQGFEVLWLPGMDHAGIATQTKVEEMLKETEGKSRYDYSREEFIEKVWEWKKEYGGKIGEQMRAIGDSVDWSRERFTLDEGLSRAVQTIFKKLYDSGMIYQANRLVNWSPVLETAVSDIEVVYKDVEGELVSIRYGSLNDDEPHVVVATTRVETMLGDVAVAVHPDDERYRHLVGTTLPHPFRDDLTLKVVADDYVDPEFGSGAVKITPAHDPNDYALGLRHHLDMPTIMDKTGRIADTGTQFDGMTREEARVKVREALAEQGRIVKEVRPYVHSVGHSERSGEAIEPRLSLQWWVKVEELAKMSGDAVRAGDTTIHPKSLEPRYFDWVDDMHDWCISRQLWWGHRIPIWYGPDGDVICVGPDEQAPEGYTQDPDVLDTWFSSALWPFSTMGWPDKTPELDKFYPTSVLVTAYDILFFWVARMMMFGTFAAKETPELLGEGTDGRPQVPFTDLFLHGLVRDEHGRKMSKSLGNGIDPMDWVDNYGADALRFTLARGANPGVDLPVGEDSAQSSRNFATKLFNATRFALMNGAVSEGLPERAELTDADRWILDRLEEVRGHVDDYLDNYQFAKANEELYHFAWNEFCDWYLEIAKVQIPREGVTERGRNTQQVLGHVLDALLRLLHPAMPFVTEVLWKALTDGESIVTSSWPTPADTNGGAAVDADAARRIADVEKLVTEIRRFRSDQGVKPSQKVPARLDFAACDLTELEGAVRALVRIEEPAEDFEESASLEIRLSTATITVELDTSGTVDVAAERKRLEKDLATANKELETTGKKLGNEAFLAKAPDAVVEKIRGRQQVAREEVERITKRLEELG.

Residues 1-15 show a composition bias toward polar residues; that stretch reads MVCVTDQNNENPSQN. The disordered stretch occupies residues 1 to 22; it reads MVCVTDQNNENPSQNRADKLPK. The short motif at 61–71 is the 'HIGH' region element; the sequence is PNVTGQLHMGH. A 'KMSKS' region motif is present at residues 552–556; that stretch reads KMSKS. Position 555 (Lys555) interacts with ATP. A coiled-coil region spans residues 836–902; it reads TVDVAAERKR…ERITKRLEEL (67 aa).

It belongs to the class-I aminoacyl-tRNA synthetase family. ValS type 1 subfamily. In terms of assembly, monomer.

It is found in the cytoplasm. The catalysed reaction is tRNA(Val) + L-valine + ATP = L-valyl-tRNA(Val) + AMP + diphosphate. Its function is as follows. Catalyzes the attachment of valine to tRNA(Val). As ValRS can inadvertently accommodate and process structurally similar amino acids such as threonine, to avoid such errors, it has a 'posttransfer' editing activity that hydrolyzes mischarged Thr-tRNA(Val) in a tRNA-dependent manner. This is Valine--tRNA ligase from Corynebacterium efficiens (strain DSM 44549 / YS-314 / AJ 12310 / JCM 11189 / NBRC 100395).